A 496-amino-acid polypeptide reads, in one-letter code: Signal recognition particle subunit SRP54 1 (496 aa).

The G-domain stretch occupies residues Met-1–Leu-296. Residues Gly-108–Thr-115, Asp-191–Arg-195, and Thr-249–Asp-252 each bind GTP. The tract at residues Gly-297–Glu-496 is M-domain.

Belongs to the GTP-binding SRP family. SRP54 subfamily. In terms of assembly, component of a signal recognition particle (SRP) complex that consists of a 7SL RNA molecule of 300 nucleotides and six protein subunits: SRP72, SRP68, SRP54, SRP19, SRP14 and SRP9.

The protein localises to the cytoplasm. Its subcellular location is the endoplasmic reticulum. It catalyses the reaction GTP + H2O = GDP + phosphate + H(+). Its function is as follows. Component of the signal recognition particle (SRP) complex, a ribonucleoprotein complex that mediates the cotranslational targeting of secretory and membrane proteins to the endoplasmic reticulum (ER). As part of the SRP complex, associates with the SRP receptor (SR) component SRPRA to target secretory proteins to the endoplasmic reticulum membrane. Binds to the signal sequence of presecretory proteins when they emerge from the ribosomes. Displays basal GTPase activity, and stimulates reciprocal GTPase activation of the SR subunit SRPRA. Forms a guanosine 5'-triphosphate (GTP)-dependent complex with the SR subunit SRPRA. SR compaction and GTPase mediated rearrangement of SR drive SRP-mediated cotranslational protein translocation into the ER. Requires the presence of SRP9/SRP14 and/or SRP19 to stably interact with RNA. This Solanum lycopersicum (Tomato) protein is Signal recognition particle subunit SRP54 1.